Reading from the N-terminus, the 300-residue chain is Recombination-associated protein RdgC (300 aa).

This sequence belongs to the RdgC family.

Its subcellular location is the cytoplasm. It is found in the nucleoid. May be involved in recombination. In Herminiimonas arsenicoxydans, this protein is Recombination-associated protein RdgC.